Here is a 157-residue protein sequence, read N- to C-terminus: Ubiquitin-like protein 4A (157 aa).

The Ubiquitin-like domain maps to 1-76 (MQLTVKALQG…LNLVVKPLEK (76 aa)). Lys48 is covalently cross-linked (Glycyl lysine isopeptide (Lys-Gly) (interchain with G-Cter in ubiquitin)). At Ser90 the chain carries Phosphoserine. A required and sufficient for interaction with BAG6 region spans residues 96–138 (WQLISKVLARHFSIGDASRVLEQLQRDYDRSLSRLTLDDIERL).

As to quaternary structure, component of the BAG6/BAT3 complex, at least composed of BAG6, UBL4A and GET4/TRC35. Interacts with BAG6; the interaction is direct and required for UBL4A protein stability. Interacts with USP13; may be indirect via BAG6. Polyubiquitinated. Ubiquitination by AMFR and deubiquitination by USP13 may regulate the interaction between the BAG6/BAT complex and SGTA and therefore may regulate client proteins fate.

The protein resides in the cytoplasm. The protein localises to the cytosol. It is found in the nucleus. As part of a cytosolic protein quality control complex, the BAG6/BAT3 complex, maintains misfolded and hydrophobic patches-containing proteins in a soluble state and participates in their proper delivery to the endoplasmic reticulum or alternatively can promote their sorting to the proteasome where they undergo degradation. The BAG6/BAT3 complex is involved in the post-translational delivery of tail-anchored/type II transmembrane proteins to the endoplasmic reticulum membrane. Recruited to ribosomes, it interacts with the transmembrane region of newly synthesized tail-anchored proteins and together with SGTA and ASNA1 mediates their delivery to the endoplasmic reticulum. Client proteins that cannot be properly delivered to the endoplasmic reticulum are ubiquitinated and sorted to the proteasome. Similarly, the BAG6/BAT3 complex also functions as a sorting platform for proteins of the secretory pathway that are mislocalized to the cytosol either delivering them to the proteasome for degradation or to the endoplasmic reticulum. The BAG6/BAT3 complex also plays a role in the endoplasmic reticulum-associated degradation (ERAD), a quality control mechanism that eliminates unwanted proteins of the endoplasmic reticulum through their retrotranslocation to the cytosol and their targeting to the proteasome. It maintains these retrotranslocated proteins in an unfolded yet soluble state condition in the cytosol to ensure their proper delivery to the proteasome. The polypeptide is Ubiquitin-like protein 4A (Ubl4a) (Rattus norvegicus (Rat)).